Reading from the N-terminus, the 625-residue chain is 1-deoxy-D-xylulose-5-phosphate synthase 1 (625 aa).

Thiamine diphosphate-binding positions include His74 and 115–117 (GHT). Asp146 contacts Mg(2+). Thiamine diphosphate-binding positions include 147-148 (GS), Asn175, Tyr286, and Glu368. Asn175 serves as a coordination point for Mg(2+).

Belongs to the transketolase family. DXPS subfamily. In terms of assembly, homodimer. Mg(2+) serves as cofactor. It depends on thiamine diphosphate as a cofactor.

The enzyme catalyses D-glyceraldehyde 3-phosphate + pyruvate + H(+) = 1-deoxy-D-xylulose 5-phosphate + CO2. The protein operates within metabolic intermediate biosynthesis; 1-deoxy-D-xylulose 5-phosphate biosynthesis; 1-deoxy-D-xylulose 5-phosphate from D-glyceraldehyde 3-phosphate and pyruvate: step 1/1. Its function is as follows. Catalyzes the acyloin condensation reaction between C atoms 2 and 3 of pyruvate and glyceraldehyde 3-phosphate to yield 1-deoxy-D-xylulose-5-phosphate (DXP). This is 1-deoxy-D-xylulose-5-phosphate synthase 1 from Geobacter metallireducens (strain ATCC 53774 / DSM 7210 / GS-15).